Consider the following 182-residue polypeptide: Small ribosomal subunit protein uS4c (182 aa).

Residues 13 to 34 (GLTSKRPRSGSDPKNQLRSGKR) are disordered. In terms of domain architecture, S4 RNA-binding spans 82–143 (MRLDNILFRL…KQRSKALIQN (62 aa)).

It belongs to the universal ribosomal protein uS4 family. In terms of assembly, part of the 30S ribosomal subunit. Contacts protein S5. The interaction surface between S4 and S5 is involved in control of translational fidelity.

The protein resides in the plastid. It localises to the chloroplast. In terms of biological role, one of the primary rRNA binding proteins, it binds directly to 16S rRNA where it nucleates assembly of the body of the 30S subunit. With S5 and S12 plays an important role in translational accuracy. The sequence is that of Small ribosomal subunit protein uS4c (rps4) from Iris lutescens (Crimean iris).